The sequence spans 153 residues: NADPH-dependent 7-cyano-7-deazaguanine reductase (153 aa).

The tract at residues 1 to 26 is disordered; it reads MVKIHDGASQLGANVAAPRSPEEATL. The active-site Thioimide intermediate is the Cys-51. The active-site Proton donor is Asp-58. Substrate contacts are provided by residues 73 to 75 and 92 to 93; these read VES and HE.

Belongs to the GTP cyclohydrolase I family. QueF type 1 subfamily.

The protein localises to the cytoplasm. It carries out the reaction 7-aminomethyl-7-carbaguanine + 2 NADP(+) = 7-cyano-7-deazaguanine + 2 NADPH + 3 H(+). The protein operates within tRNA modification; tRNA-queuosine biosynthesis. Its function is as follows. Catalyzes the NADPH-dependent reduction of 7-cyano-7-deazaguanine (preQ0) to 7-aminomethyl-7-deazaguanine (preQ1). In Methylocella silvestris (strain DSM 15510 / CIP 108128 / LMG 27833 / NCIMB 13906 / BL2), this protein is NADPH-dependent 7-cyano-7-deazaguanine reductase.